The primary structure comprises 366 residues: RNA 3'-terminal phosphate cyclase (366 aa).

ATP is bound by residues Q104, P131, Y294, D297, Q298, and H320. Residue H320 is the Tele-AMP-histidine intermediate of the active site.

Belongs to the RNA 3'-terminal cyclase family. Type 1 subfamily.

The protein localises to the nucleus. It is found in the nucleoplasm. It carries out the reaction a 3'-end 3'-phospho-ribonucleotide-RNA + ATP = a 3'-end 2',3'-cyclophospho-ribonucleotide-RNA + AMP + diphosphate. Catalyzes the conversion of 3'-phosphate to a 2',3'-cyclic phosphodiester at the end of RNA. The mechanism of action of the enzyme occurs in 3 steps: (A) adenylation of the enzyme by ATP; (B) transfer of adenylate to an RNA-N3'P to produce RNA-N3'PP5'A; (C) and attack of the adjacent 2'-hydroxyl on the 3'-phosphorus in the diester linkage to produce the cyclic end product. Likely functions in some aspects of cellular RNA processing. Function plays an important role in regulating axon regeneration by inhibiting central nervous system (CNS) axon regeneration following optic nerve injury. This Macaca fascicularis (Crab-eating macaque) protein is RNA 3'-terminal phosphate cyclase (RTCA).